The following is a 700-amino-acid chain: Methionine--tRNA ligase (700 aa).

Positions 14 to 24 match the 'HIGH' region motif; the sequence is PYANGPVHLGH. Residues Cys-146, Cys-149, Cys-159, and Cys-162 each coordinate Zn(2+). Residues 343–347 carry the 'KMSKS' region motif; that stretch reads KFSKS. Lys-346 serves as a coordination point for ATP. The region spanning 599–700 is the tRNA-binding domain; it reads EFEKIDLRVA…GDSIVGKPVK (102 aa).

It belongs to the class-I aminoacyl-tRNA synthetase family. MetG type 1 subfamily. As to quaternary structure, homodimer. Zn(2+) serves as cofactor.

It localises to the cytoplasm. The enzyme catalyses tRNA(Met) + L-methionine + ATP = L-methionyl-tRNA(Met) + AMP + diphosphate. In terms of biological role, is required not only for elongation of protein synthesis but also for the initiation of all mRNA translation through initiator tRNA(fMet) aminoacylation. The sequence is that of Methionine--tRNA ligase from Chloroherpeton thalassium (strain ATCC 35110 / GB-78).